The chain runs to 341 residues: S-adenosylmethionine:tRNA ribosyltransferase-isomerase (341 aa).

Belongs to the QueA family. In terms of assembly, monomer.

The protein localises to the cytoplasm. It carries out the reaction 7-aminomethyl-7-carbaguanosine(34) in tRNA + S-adenosyl-L-methionine = epoxyqueuosine(34) in tRNA + adenine + L-methionine + 2 H(+). It participates in tRNA modification; tRNA-queuosine biosynthesis. Its function is as follows. Transfers and isomerizes the ribose moiety from AdoMet to the 7-aminomethyl group of 7-deazaguanine (preQ1-tRNA) to give epoxyqueuosine (oQ-tRNA). This Clostridium botulinum (strain Eklund 17B / Type B) protein is S-adenosylmethionine:tRNA ribosyltransferase-isomerase.